The primary structure comprises 218 residues: Ras-related protein RabT2 (218 aa).

32–39 (GDYKTGKG) contacts GTP. Residues 54 to 61 (VSSIGVDF) carry the Effector region motif. Residues 80–84 (DANSC) and 140–143 (NKCD) contribute to the GTP site. Cys-215 carries the post-translational modification Cysteine methyl ester. Residue Cys-215 is the site of S-geranylgeranyl cysteine attachment. The propeptide at 216–218 (NIL) is removed in mature form.

It belongs to the small GTPase superfamily. Rab family.

It localises to the cell membrane. This Dictyostelium discoideum (Social amoeba) protein is Ras-related protein RabT2 (rabT2).